The sequence spans 482 residues: Caspase-8 (482 aa).

Residues 1–218 constitute a propeptide that is removed on maturation; the sequence is MDFHSCLYDI…DMWDSPGEQE (218 aa). 2 consecutive DED domains span residues 2–80 and 100–177; these read DFHS…RVLK and AYRV…RIDD. A phosphoserine mark is found at S188 and S213. H319 is an active-site residue. The residue at position 336 (Y336) is a Phosphotyrosine. C362 is an active-site residue. Positions 379 to 388 are excised as a propeptide; it reads LEQEHVLEED. S390 is subject to Phosphoserine; by CDK1.

The protein belongs to the peptidase C14A family. In terms of assembly, heterotetramer that consists of two anti-parallel arranged heterodimers, each one formed by a 18 kDa (p18) and a 10 kDa (p10) subunit. Component of the death-induced signaling complex (DISC) composed of cell surface receptor FAS/CD95 or TNFRSF1A, adapter protein FADD and the CASP8 protease; recruitment of CASP8 to the complex is required for processing of CASP8 into the p18 and p10 subunits. Component of the AIM2 PANoptosome complex, a multiprotein complex that drives inflammatory cell death (PANoptosis). Interacts with CFLAR and PEA15. Interacts with RFFL and RNF34; negatively regulate CASP8 through proteasomal degradation. Interacts with TNFAIP8L2. Interacts with CASP8AP2. Interacts with NOL3; decreases CASP8 activity in a mitochondria localization- and phosphorylation-dependent manner and this interaction is dissociated by calcium. Interacts with UBR2. Interacts with RIPK1. Interacts with stimulated TNFRSF10B; this interaction is followed by CASP8 proteolytic cleavage and activation. In terms of processing, generation of the subunits requires association with the death-inducing signaling complex (DISC), whereas additional processing is likely due to the autocatalytic activity of the activated protease. GZMB and CASP10 can be involved in these processing events. Post-translationally, phosphorylation on Ser-389 during mitosis by CDK1 inhibits activation by proteolysis and prevents apoptosis. This phosphorylation occurs in cancer cell lines, as well as in primary breast tissues and lymphocytes.

The protein resides in the cytoplasm. It is found in the nucleus. The catalysed reaction is Strict requirement for Asp at position P1 and has a preferred cleavage sequence of (Leu/Asp/Val)-Glu-Thr-Asp-|-(Gly/Ser/Ala).. CASP8 activity is restricted by RIPK1. Functionally, thiol protease that plays a key role in programmed cell death by acting as a molecular switch for apoptosis, necroptosis and pyroptosis, and is required to prevent tissue damage during embryonic development and adulthood. Initiator protease that induces extrinsic apoptosis by mediating cleavage and activation of effector caspases responsible for FAS/CD95-mediated and TNFRSF1A-induced cell death. Cleaves and activates effector caspases CASP3, CASP4, CASP6, CASP7, CASP9 and CASP10. Binding to the adapter molecule FADD recruits it to either receptor FAS/CD95 or TNFRSF1A. The resulting aggregate called the death-inducing signaling complex (DISC) performs CASP8 proteolytic activation. The active dimeric enzyme is then liberated from the DISC and free to activate downstream apoptotic proteases. Proteolytic fragments of the N-terminal propeptide (termed CAP3, CAP5 and CAP6) are likely retained in the DISC. In addition to extrinsic apoptosis, also acts as a negative regulator of necroptosis: acts by cleaving RIPK1 at 'Asp-325', which is crucial to inhibit RIPK1 kinase activity, limiting TNF-induced apoptosis, necroptosis and inflammatory response. Also able to initiate pyroptosis by mediating cleavage and activation of gasdermin-C and -D (GSDMC and GSDMD, respectively): gasdermin cleavage promotes release of the N-terminal moiety that binds to membranes and forms pores, triggering pyroptosis. Initiates pyroptosis following inactivation of MAP3K7/TAK1. Also acts as a regulator of innate immunity by mediating cleavage and inactivation of N4BP1 downstream of TLR3 or TLR4, thereby promoting cytokine production. May participate in the Granzyme B (GZMB) cell death pathways. Cleaves PARP1 and PARP2. In Rattus norvegicus (Rat), this protein is Caspase-8.